Here is a 210-residue protein sequence, read N- to C-terminus: MPPYTVVYFPVRGRCAALRMLLADQGQSWKEEVVTMETWQEGSLKASCLYGQLPKFQDGDLTLYQSNTFLRHLGRTLGLYGKDQREAALVDMVNDGVEDLRCKYLSLIYTNYEAGKDDYVKALPGQLKPFETLLSQNQGGKTFIVGDQISFADYNLLDLLLIHEVLAPGCLDAFPLLSAYVARLSARPKLKAFLASPEHVNLPINGNGKQ.

The GST N-terminal domain maps to proline 2–glycine 81. Tyrosine 4 is modified (phosphotyrosine; by EGFR). Residues tyrosine 8, arginine 14, tryptophan 39, lysine 45, and glutamine 52 to leucine 53 each bind glutathione. Threonine 62 is subject to Phosphothreonine. Residue glutamine 65–serine 66 participates in glutathione binding. Residues aspartate 83–isoleucine 204 enclose the GST C-terminal domain. N6-succinyllysine occurs at positions 103 and 116. Lysine 128 carries the N6-acetyllysine modification.

The protein belongs to the GST superfamily. Pi family. Homodimer. Interacts with CDK5.

The protein resides in the cytoplasm. It is found in the mitochondrion. It localises to the nucleus. It carries out the reaction RX + glutathione = an S-substituted glutathione + a halide anion + H(+). The catalysed reaction is prostaglandin J2 + glutathione = prostaglandin J2-S-(R)-glutathione. It catalyses the reaction prostaglandin J2 + glutathione = prostaglandin J2-S-(S)-glutathione. The enzyme catalyses prostaglandin A2 + glutathione = prostaglandin A2-S-(S)-glutathione. It carries out the reaction 11(S)-hydroxy-14(S),15(S)-epoxy-(5Z,8Z,12E)-eicosatrienoate + glutathione = (11S,15S)-dihydroxy-14(R)-S-glutathionyl-(5Z,8Z,12E)-eicosatrienoate. Its function is as follows. Conjugation of reduced glutathione to a wide number of exogenous and endogenous hydrophobic electrophiles. Involved in the formation of glutathione conjugates of both prostaglandin A2 (PGA2) and prostaglandin J2 (PGJ2). Participates in the formation of novel hepoxilin regioisomers. Negatively regulates CDK5 activity via p25/p35 translocation to prevent neurodegeneration. The protein is Glutathione S-transferase P (GSTP1) of Macaca mulatta (Rhesus macaque).